We begin with the raw amino-acid sequence, 130 residues long: S-protein homolog 30 (130 aa).

2 N-linked (GlcNAc...) asparagine glycosylation sites follow: Asn-64 and Asn-77.

The protein belongs to the plant self-incompatibility (S1) protein family.

The protein localises to the secreted. The polypeptide is S-protein homolog 30 (Arabidopsis thaliana (Mouse-ear cress)).